The primary structure comprises 563 residues: Alpha-humulene synthase (563 aa).

Residues Asp-316, Asp-320, Asp-461, and Glu-469 each contribute to the Mg(2+) site. A DDXXD motif motif is present at residues 316–320; sequence DDIYD.

It belongs to the terpene synthase family. Tpsa subfamily. Mg(2+) is required as a cofactor. The cofactor is Mn(2+). In terms of tissue distribution, expressed in trichomes, cones and young leaves.

The catalysed reaction is (2E,6E)-farnesyl diphosphate = alpha-humulene + diphosphate. It participates in sesquiterpene biosynthesis. Its pathway is secondary metabolite biosynthesis; terpenoid biosynthesis. Sesquiterpene synthase that catalyzes the formation of alpha-humulene. Can use farnesyl diphosphate (FPP) as substrate, but not geranyl diphosphate (GPP) or geranylgeranyl diphosphate (GGPP). The polypeptide is Alpha-humulene synthase (Humulus lupulus (European hop)).